Consider the following 179-residue polypeptide: Protein PLASTID REDOX INSENSITIVE 2, chloroplastic (179 aa).

A chloroplast-targeting transit peptide spans 1–69 (MASMHEALFS…SLSRRGFVCR (69 aa)).

Binds DNA when in complex with CSP41b.

Its subcellular location is the plastid. It is found in the chloroplast stroma. The protein resides in the chloroplast nucleoid. Its function is as follows. Involved in redox-mediated retrograde signaling to synchronize the expression of photosynthetic genes from both the nuclear and plastidic genomes, especially in excess light conditions. Required for full expression of genes transcribed by the plastid-encoded RNA polymerase (PEP). Essential for embryo development. The polypeptide is Protein PLASTID REDOX INSENSITIVE 2, chloroplastic (Arabidopsis thaliana (Mouse-ear cress)).